Consider the following 289-residue polypeptide: ATP synthase mitochondrial F1 complex assembly factor 2 (289 aa).

The transit peptide at 1-40 directs the protein to the mitochondrion; it reads MWRSCLRLRDGGRRLLNRPAGGPSASMSPGPTIPSPARAY. Residues 13 to 40 form a disordered region; it reads RRLLNRPAGGPSASMSPGPTIPSPARAY. Lysine 133 is modified (N6-succinyllysine).

Belongs to the ATP12 family. As to quaternary structure, interacts with ATP5F1B; involved in the assembly of the F1 component of the mitochondrial ATP synthase (ATPase). Interacts with FMC1. Widely expressed.

It localises to the mitochondrion inner membrane. In terms of biological role, plays a role in the assembly of the F1 component of the mitochondrial ATP synthase (ATPase). The polypeptide is ATP synthase mitochondrial F1 complex assembly factor 2 (Homo sapiens (Human)).